A 336-amino-acid chain; its full sequence is Mitochondrial import receptor subunit TOM40 homolog (336 aa).

Residues 1 to 58 form a disordered region; sequence MGNVLAASSPAPPPAGSPPVPGLVSVPPGFTMPPVAGLTPTPDKKEPQEERLPNPGTF. Pro residues predominate over residues 10 to 21; sequence PAPPPAGSPPVP. The span at 42–52 shows a compositional bias: basic and acidic residues; it reads PDKKEPQEERL.

This sequence belongs to the Tom40 family. As to quaternary structure, forms part of the preprotein translocase complex of the outer mitochondrial membrane (TOM complex). Interacts with mitochondrial targeting sequences.

The protein resides in the mitochondrion outer membrane. Its function is as follows. Channel-forming protein essential for import of protein precursors into mitochondria. The chain is Mitochondrial import receptor subunit TOM40 homolog (tomm40) from Xenopus laevis (African clawed frog).